Here is a 174-residue protein sequence, read N- to C-terminus: Large ribosomal subunit protein uL10 (174 aa).

It belongs to the universal ribosomal protein uL10 family. In terms of assembly, part of the ribosomal stalk of the 50S ribosomal subunit. The N-terminus interacts with L11 and the large rRNA to form the base of the stalk. The C-terminus forms an elongated spine to which L12 dimers bind in a sequential fashion forming a multimeric L10(L12)X complex.

Its function is as follows. Forms part of the ribosomal stalk, playing a central role in the interaction of the ribosome with GTP-bound translation factors. This chain is Large ribosomal subunit protein uL10, found in Synechococcus sp. (strain RCC307).